A 144-amino-acid chain; its full sequence is 3-dehydroquinate dehydratase (144 aa).

Residue Tyr-24 is the Proton acceptor of the active site. Substrate is bound by residues Asn-73, His-79, and Asp-86. The Proton donor role is filled by His-99. Substrate contacts are provided by residues 100–101 (LS) and Arg-110.

The protein belongs to the type-II 3-dehydroquinase family. As to quaternary structure, homododecamer.

The enzyme catalyses 3-dehydroquinate = 3-dehydroshikimate + H2O. It participates in metabolic intermediate biosynthesis; chorismate biosynthesis; chorismate from D-erythrose 4-phosphate and phosphoenolpyruvate: step 3/7. In terms of biological role, catalyzes a trans-dehydration via an enolate intermediate. The polypeptide is 3-dehydroquinate dehydratase (Shewanella sp. (strain MR-4)).